The chain runs to 472 residues: Adenosylhomocysteinase (472 aa).

Positions 64, 138, and 198 each coordinate substrate. 199 to 201 (TTT) contributes to the NAD(+) binding site. 2 residues coordinate substrate: Lys-228 and Asp-232. NAD(+)-binding positions include Asn-233, 262–267 (GFGDVG), Glu-285, Asn-320, 341–343 (IGH), and Asn-386.

This sequence belongs to the adenosylhomocysteinase family. Requires NAD(+) as cofactor.

Its subcellular location is the cytoplasm. It catalyses the reaction S-adenosyl-L-homocysteine + H2O = L-homocysteine + adenosine. It functions in the pathway amino-acid biosynthesis; L-homocysteine biosynthesis; L-homocysteine from S-adenosyl-L-homocysteine: step 1/1. Its function is as follows. May play a key role in the regulation of the intracellular concentration of adenosylhomocysteine. The polypeptide is Adenosylhomocysteinase (Prochlorococcus marinus subsp. pastoris (strain CCMP1986 / NIES-2087 / MED4)).